Consider the following 512-residue polypeptide: Ferrochelatase-2, chloroplastic (512 aa).

Residues 1 to 32 form a disordered region; it reads MNCPAMTASPSSSSSSSYSTFRPPPPLLPQLS. A chloroplast-targeting transit peptide spans 1–83; it reads MNCPAMTASP…SNPLNISSSS (83 aa). The segment covering 9–21 has biased composition (low complexity); that stretch reads SPSSSSSSSYSTF. At V84 the chain carries N-acetylvaline.

It belongs to the ferrochelatase family. Expressed in leaves and flowers.

Its subcellular location is the plastid. The protein resides in the chloroplast membrane. It is found in the chloroplast thylakoid membrane. It carries out the reaction heme b + 2 H(+) = protoporphyrin IX + Fe(2+). It functions in the pathway porphyrin-containing compound metabolism; protoheme biosynthesis; protoheme from protoporphyrin-IX: step 1/1. Functionally, catalyzes the last step of heme biosynthesis by inserting ferrous iron into protoporphyrin IX to produce protoheme. Produces heme for photosynthetic cytochromes, and for proteins involved in abiotic and biotic stress responses. May play a role in the quality control of individual chloroplasts during photo-oxidative stress through regulation of heme biosynthesis. In Arabidopsis thaliana (Mouse-ear cress), this protein is Ferrochelatase-2, chloroplastic.